The chain runs to 193 residues: 3-isopropylmalate dehydratase small subunit (193 aa).

Belongs to the LeuD family. LeuD type 1 subfamily. Heterodimer of LeuC and LeuD.

It catalyses the reaction (2R,3S)-3-isopropylmalate = (2S)-2-isopropylmalate. It functions in the pathway amino-acid biosynthesis; L-leucine biosynthesis; L-leucine from 3-methyl-2-oxobutanoate: step 2/4. In terms of biological role, catalyzes the isomerization between 2-isopropylmalate and 3-isopropylmalate, via the formation of 2-isopropylmaleate. This chain is 3-isopropylmalate dehydratase small subunit, found in Bacillus cereus (strain B4264).